Here is a 225-residue protein sequence, read N- to C-terminus: Pyridoxine/pyridoxamine 5'-phosphate oxidase (225 aa).

Substrate-binding positions include 9–12 (RVDY) and lysine 78. Residues 73–78 (RTVLCK), 88–89 (YT), lysine 95, and glutamine 117 contribute to the FMN site. Substrate is bound by residues tyrosine 135, arginine 139, and serine 143. Residues 152–153 (QS) and tryptophan 198 contribute to the FMN site. 204–206 (RLH) lines the substrate pocket. Arginine 208 contacts FMN.

It belongs to the pyridoxamine 5'-phosphate oxidase family. In terms of assembly, homodimer. The cofactor is FMN.

The catalysed reaction is pyridoxamine 5'-phosphate + O2 + H2O = pyridoxal 5'-phosphate + H2O2 + NH4(+). It carries out the reaction pyridoxine 5'-phosphate + O2 = pyridoxal 5'-phosphate + H2O2. It functions in the pathway cofactor metabolism; pyridoxal 5'-phosphate salvage; pyridoxal 5'-phosphate from pyridoxamine 5'-phosphate: step 1/1. It participates in cofactor metabolism; pyridoxal 5'-phosphate salvage; pyridoxal 5'-phosphate from pyridoxine 5'-phosphate: step 1/1. Catalyzes the oxidation of either pyridoxine 5'-phosphate (PNP) or pyridoxamine 5'-phosphate (PMP) into pyridoxal 5'-phosphate (PLP). The chain is Pyridoxine/pyridoxamine 5'-phosphate oxidase from Nocardia farcinica (strain IFM 10152).